The sequence spans 1172 residues: Lysylphosphatidylglycerol biosynthesis bifunctional protein LysX (1172 aa).

The disordered stretch occupies residues 1–34 (MGLHLTVPGLRRDGRGVQSNSHDTSSKTTADISR). Residues 1 to 663 (MGLHLTVPGL…LLHHDGSAPD (663 aa)) are phosphatidylglycerol lysyltransferase. Polar residues predominate over residues 17-31 (VQSNSHDTSSKTTAD). The next 7 helical transmembrane spans lie at 80 to 100 (VPAA…LASV), 122 to 142 (FPDT…ALTA), 146 to 166 (IAWL…AAEI), 177 to 197 (FGEN…VLGY), 214 to 234 (AVWL…VELF), 272 to 292 (AIFG…LFLS), and 612 to 632 (VIPR…LPFS). The tract at residues 664-1172 (VSGLRQVGLT…TLPFPLAKPH (509 aa)) is lysine--tRNA ligase. Residues 726–804 (VSVSGRIMRI…SLIVSGWRLI (79 aa)) constitute a DNA-binding region (OB). Residues Asp-1084 and Glu-1091 each coordinate Mg(2+).

The protein in the N-terminal section; belongs to the LPG synthetase family. It in the C-terminal section; belongs to the class-II aminoacyl-tRNA synthetase family. Mg(2+) is required as a cofactor.

It localises to the cell membrane. It carries out the reaction tRNA(Lys) + L-lysine + ATP = L-lysyl-tRNA(Lys) + AMP + diphosphate. The catalysed reaction is L-lysyl-tRNA(Lys) + a 1,2-diacyl-sn-glycero-3-phospho-(1'-sn-glycerol) = a 1,2-diacyl-sn-glycero-3-phospho-1'-(3'-O-L-lysyl)-sn-glycerol + tRNA(Lys). Its function is as follows. Catalyzes the production of L-lysyl-tRNA(Lys)transfer and the transfer of a lysyl group from L-lysyl-tRNA(Lys) to membrane-bound phosphatidylglycerol (PG), which produces lysylphosphatidylglycerol (LPG), one of the components of the bacterial membrane with a positive net charge. LPG synthesis contributes to the resistance to cationic antimicrobial peptides (CAMPs) and likely protects M.tuberculosis against the CAMPs produced by competiting microorganisms (bacteriocins). In fact, the modification of anionic phosphatidylglycerol with positively charged L-lysine results in repulsion of the peptides. The polypeptide is Lysylphosphatidylglycerol biosynthesis bifunctional protein LysX (lysX) (Mycobacterium bovis (strain BCG / Pasteur 1173P2)).